Reading from the N-terminus, the 414-residue chain is CCA-adding enzyme (414 aa).

2 residues coordinate ATP: glycine 8 and arginine 11. CTP contacts are provided by glycine 8 and arginine 11. Residues aspartate 21 and aspartate 23 each coordinate Mg(2+). ATP-binding residues include arginine 91, arginine 137, and arginine 140. CTP-binding residues include arginine 91, arginine 137, and arginine 140.

This sequence belongs to the tRNA nucleotidyltransferase/poly(A) polymerase family. Bacterial CCA-adding enzyme type 2 subfamily. Mg(2+) serves as cofactor.

The enzyme catalyses a tRNA precursor + 2 CTP + ATP = a tRNA with a 3' CCA end + 3 diphosphate. It catalyses the reaction a tRNA with a 3' CCA end + 2 CTP + ATP = a tRNA with a 3' CCACCA end + 3 diphosphate. Its function is as follows. Catalyzes the addition and repair of the essential 3'-terminal CCA sequence in tRNAs without using a nucleic acid template. Adds these three nucleotides in the order of C, C, and A to the tRNA nucleotide-73, using CTP and ATP as substrates and producing inorganic pyrophosphate. tRNA 3'-terminal CCA addition is required both for tRNA processing and repair. Also involved in tRNA surveillance by mediating tandem CCA addition to generate a CCACCA at the 3' terminus of unstable tRNAs. While stable tRNAs receive only 3'-terminal CCA, unstable tRNAs are marked with CCACCA and rapidly degraded. The polypeptide is CCA-adding enzyme (Buchnera aphidicola subsp. Acyrthosiphon pisum (strain 5A)).